The chain runs to 250 residues: Indole-3-glycerol phosphate synthase (250 aa).

The protein belongs to the TrpC family.

The catalysed reaction is 1-(2-carboxyphenylamino)-1-deoxy-D-ribulose 5-phosphate + H(+) = (1S,2R)-1-C-(indol-3-yl)glycerol 3-phosphate + CO2 + H2O. It participates in amino-acid biosynthesis; L-tryptophan biosynthesis; L-tryptophan from chorismate: step 4/5. The polypeptide is Indole-3-glycerol phosphate synthase (Picrophilus torridus (strain ATCC 700027 / DSM 9790 / JCM 10055 / NBRC 100828 / KAW 2/3)).